Here is a 635-residue protein sequence, read N- to C-terminus: DNA mismatch repair protein MutL (635 aa).

The disordered stretch occupies residues lysine 352–arginine 380.

Belongs to the DNA mismatch repair MutL/HexB family.

Functionally, this protein is involved in the repair of mismatches in DNA. It is required for dam-dependent methyl-directed DNA mismatch repair. May act as a 'molecular matchmaker', a protein that promotes the formation of a stable complex between two or more DNA-binding proteins in an ATP-dependent manner without itself being part of a final effector complex. In Symbiobacterium thermophilum (strain DSM 24528 / JCM 14929 / IAM 14863 / T), this protein is DNA mismatch repair protein MutL.